A 90-amino-acid polypeptide reads, in one-letter code: Albumin (90 aa).

Phosphoserine is present on Ser-5. Glu-6 and Asp-13 together coordinate Ca(2+). An Albumin domain is found at 25-90 (LLRHLVDEPQ…LVASTQAALA (66 aa)). At Ser-61 the chain carries Phosphoserine. Residues Thr-62 and Thr-64 each carry the phosphothreonine modification. Position 80 is an N6-methyllysine (Lys-80).

The protein belongs to the ALB/AFP/VDB family. In terms of assembly, interacts with FCGRT; this interaction regulates ALB homeostasis. Interacts with TASOR. In plasma, occurs in a covalently-linked complex with chromophore-bound alpha-1-microglobulin; this interaction does not prevent fatty acid binding to ALB. In terms of tissue distribution, plasma.

It localises to the secreted. Functionally, binds water, Ca(2+), Na(+), K(+), fatty acids, hormones, bilirubin and drugs. Its main function is the regulation of the colloidal osmotic pressure of blood. Major zinc transporter in plasma, typically binds about 80% of all plasma zinc. Major calcium and magnesium transporter in plasma, binds approximately 45% of circulating calcium and magnesium in plasma. Potentially has more than two calcium-binding sites and might additionally bind calcium in a non-specific manner. The shared binding site between zinc and calcium suggests a crosstalk between zinc and calcium transport in the blood. The rank order of affinity is zinc &gt; calcium &gt; magnesium. Binds to the bacterial siderophore enterobactin and inhibits enterobactin-mediated iron uptake of E.coli from ferric transferrin, and may thereby limit the utilization of iron and growth of enteric bacteria such as E.coli. Does not prevent iron uptake by the bacterial siderophore aerobactin. The polypeptide is Albumin (Capra hircus (Goat)).